Here is a 155-residue protein sequence, read N- to C-terminus: Small ribosomal subunit protein uS7cz/uS7cy (155 aa).

This sequence belongs to the universal ribosomal protein uS7 family. In terms of assembly, part of the 30S ribosomal subunit.

It is found in the plastid. The protein resides in the chloroplast. One of the primary rRNA binding proteins, it binds directly to 16S rRNA where it nucleates assembly of the head domain of the 30S subunit. This is Small ribosomal subunit protein uS7cz/uS7cy (rps7-A) from Ipomoea purpurea (Common morning glory).